Here is a 310-residue protein sequence, read N- to C-terminus: Ribosomal RNA small subunit methyltransferase H (310 aa).

S-adenosyl-L-methionine is bound by residues 32–34 (AGH), Asp-52, Phe-79, Asp-100, and Gln-107.

The protein belongs to the methyltransferase superfamily. RsmH family.

The protein resides in the cytoplasm. It catalyses the reaction cytidine(1402) in 16S rRNA + S-adenosyl-L-methionine = N(4)-methylcytidine(1402) in 16S rRNA + S-adenosyl-L-homocysteine + H(+). Functionally, specifically methylates the N4 position of cytidine in position 1402 (C1402) of 16S rRNA. The polypeptide is Ribosomal RNA small subunit methyltransferase H (Halalkalibacterium halodurans (strain ATCC BAA-125 / DSM 18197 / FERM 7344 / JCM 9153 / C-125) (Bacillus halodurans)).